Reading from the N-terminus, the 189-residue chain is uncharacterized protein (189 aa).

Basic and acidic residues predominate over residues 1–15 (MDKHGVKTPLWRKEV). A disordered region spans residues 1–77 (MDKHGVKTPL…SPLRQESSSQ (77 aa)). Composition is skewed to acidic residues over residues 16 to 29 (EDPEAREEDLEDDS) and 46 to 56 (SATETEEDSRD). The span at 65–77 (VSYSPLRQESSSQ) shows a compositional bias: polar residues.

This is an uncharacterized protein from Mus musculus (Mouse).